Consider the following 447-residue polypeptide: Na(+)-translocating NADH-quinone reductase subunit A (447 aa).

It belongs to the NqrA family. Composed of six subunits; NqrA, NqrB, NqrC, NqrD, NqrE and NqrF.

The catalysed reaction is a ubiquinone + n Na(+)(in) + NADH + H(+) = a ubiquinol + n Na(+)(out) + NAD(+). In terms of biological role, NQR complex catalyzes the reduction of ubiquinone-1 to ubiquinol by two successive reactions, coupled with the transport of Na(+) ions from the cytoplasm to the periplasm. NqrA to NqrE are probably involved in the second step, the conversion of ubisemiquinone to ubiquinol. In Klebsiella pneumoniae (strain 342), this protein is Na(+)-translocating NADH-quinone reductase subunit A.